The following is a 213-amino-acid chain: mRNA-decapping protein OPG121 (213 aa).

Positions 16 and 50 each coordinate N(7)-methyl-GTP. Residues 30–209 enclose the Nudix hydrolase domain; sequence KDTHVFAACI…EYLSYIYNML (180 aa). A Nudix box motif is present at residues 111-132; that stretch reads GKLDKKESIKDCLRRELKEESD. Glu-126 acts as the Nucleophile in catalysis. Glu-126 and Glu-130 together coordinate Mg(2+). Asp-151 is a N(7)-methyl-GTP binding site. Glu-183 contributes to the Mg(2+) binding site.

This sequence belongs to the Nudix hydrolase family. Mg(2+) is required as a cofactor. Requires Mn(2+) as cofactor.

The enzyme catalyses a 5'-end (N(7)-methyl 5'-triphosphoguanosine)-guanosine in mRNA + H2O = a 5'-end phospho-guanosine in mRNA + N(7)-methyl-GDP + 2 H(+). Its function is as follows. Decapping enzyme that remove the protective 5'-cap from both host and viral mRNAs to commit transcripts for decay by the cellular exonuclease XRN1. Accelerates viral and cellular mRNA turnover to eliminate competing host mRNAs and allow stage-specific synthesis of viral proteins. Acceleration of the turnover of cellular transcripts may even promote the shutoff of host protein synthesis. In Vaccinia virus (strain Western Reserve) (VACV), this protein is mRNA-decapping protein OPG121 (OPG121).